Here is a 167-residue protein sequence, read N- to C-terminus: MLPMITGFMNYGQQTLRAARYIGQGFMITLSHTNRLPVTIQYPYEKLIISERFRGRIHFEFDKCIACEVCVRVCPIDLPVVDWKLETHIRKKRLLNYSIDFGICIFCGNCVEYCPTNCLSMTEEYEFSTYDRHELNYNQIALGRLPMSVIDDYTIRTILNSPQIKNG.

2 4Fe-4S ferredoxin-type domains span residues 55–84 and 95–124; these read GRIH…VDWK and LNYS…MTEE. Cys64, Cys67, Cys70, Cys74, Cys104, Cys107, Cys110, and Cys114 together coordinate [4Fe-4S] cluster.

This sequence belongs to the complex I 23 kDa subunit family. In terms of assembly, NDH is composed of at least 16 different subunits, 5 of which are encoded in the nucleus. It depends on [4Fe-4S] cluster as a cofactor.

It localises to the plastid. Its subcellular location is the chloroplast thylakoid membrane. The catalysed reaction is a plastoquinone + NADH + (n+1) H(+)(in) = a plastoquinol + NAD(+) + n H(+)(out). It carries out the reaction a plastoquinone + NADPH + (n+1) H(+)(in) = a plastoquinol + NADP(+) + n H(+)(out). In terms of biological role, NDH shuttles electrons from NAD(P)H:plastoquinone, via FMN and iron-sulfur (Fe-S) centers, to quinones in the photosynthetic chain and possibly in a chloroplast respiratory chain. The immediate electron acceptor for the enzyme in this species is believed to be plastoquinone. Couples the redox reaction to proton translocation, and thus conserves the redox energy in a proton gradient. In Aethionema grandiflorum (Persian stone-cress), this protein is NAD(P)H-quinone oxidoreductase subunit I, chloroplastic.